The chain runs to 286 residues: 5-amino-6-(5-phospho-D-ribitylamino)uracil phosphatase YwtE (286 aa).

Asp7 serves as the catalytic Nucleophile. Asp7 serves as a coordination point for Mg(2+). Leu8 lines the phosphate pocket. Asp9 provides a ligand contact to Mg(2+). Phosphate contacts are provided by residues 41 to 42 and Lys210; that span reads TG. 2 residues coordinate Mg(2+): Asp233 and Ser234. Asn236 provides a ligand contact to phosphate.

It belongs to the HAD-like hydrolase superfamily. Cof family. Mg(2+) is required as a cofactor.

It carries out the reaction 5-amino-6-(5-phospho-D-ribitylamino)uracil + H2O = 5-amino-6-(D-ribitylamino)uracil + phosphate. It functions in the pathway cofactor biosynthesis; riboflavin biosynthesis; 5-amino-6-(D-ribitylamino)uracil from GTP: step 4/4. Catalyzes the dephosphorylation of the riboflavin precursor 5-amino-6-(5-phospho-D-ribitylamino)uracil and of flavin mononucleotide (FMN) in vitro. Also catalyzes the dephosphorylation of phosphorylated 5-6 carbon sugars and monophosphate nucleotides (NMP) in vitro. In Bacillus subtilis (strain 168), this protein is 5-amino-6-(5-phospho-D-ribitylamino)uracil phosphatase YwtE (ywtE).